Consider the following 2283-residue polypeptide: DNA polymerase epsilon catalytic subunit A (2283 aa).

A disordered region spans residues 1–32 (MVLRNSGRRHPEPGADGEGSRDDGPSSSVSAL). Basic and acidic residues predominate over residues 9 to 24 (RHPEPGADGEGSRDDG). Phosphoserine occurs at positions 1184, 1296, and 1316. Disordered regions lie at residues 1935-1968 (GQVK…GESE) and 2014-2041 (HSAP…TGSL). Basic and acidic residues predominate over residues 1936-1946 (QVKEQDSQARE). Over residues 1947–1968 (ETDEEEEDKEKDEEEEGMGESE) the composition is skewed to acidic residues. A compositionally biased stretch (polar residues) spans 2028-2037 (SQFSQESEGA). Residues C2155, C2158, C2184, and C2187 each coordinate Zn(2+). A CysA-type zinc finger spans residues 2155–2187 (CHSCNFCRDLDLCKDSSFSQDGAILPQWLCSNC). [4Fe-4S] cluster-binding residues include C2218, C2221, C2233, and C2235. A CysB motif motif is present at residues 2218–2235 (CLKCRGMKETHMPVYCSC).

Belongs to the DNA polymerase type-B family. In terms of assembly, component of the DNA polymerase epsilon complex consisting of four subunits: the catalytic subunit POLE and the accessory subunits POLE2, POLE3 and POLE4. Interacts with RAD17 and TOPBP1. [4Fe-4S] cluster is required as a cofactor.

It localises to the nucleus. It catalyses the reaction DNA(n) + a 2'-deoxyribonucleoside 5'-triphosphate = DNA(n+1) + diphosphate. Catalytic component of the DNA polymerase epsilon complex. Participates in chromosomal DNA replication. Required during synthesis of the leading DNA strands at the replication fork and binds at/or near replication origins and moves along DNA with the replication fork. Has 3'-5' proofreading exonuclease activity that corrects errors arising during DNA replication. It is also involved in DNA synthesis during DNA repair. The chain is DNA polymerase epsilon catalytic subunit A (Pole) from Mus musculus (Mouse).